We begin with the raw amino-acid sequence, 5162 residues long: Linear gramicidin synthase subunit B (5162 aa).

4 consecutive Carrier domains span residues 963–1038 (APRN…QALR), 2027–2101 (EPQS…VVLE), 3541–3616 (APRN…GAIG), and 4601–4675 (AATS…GQST). S998, S2062, S3576, and S4636 each carry O-(pantetheine 4'-phosphoryl)serine.

It belongs to the ATP-dependent AMP-binding enzyme family. As to quaternary structure, large multienzyme complex composed of 4 subunits; LgrA, LgrB, LgrC and LgrD. Pantetheine 4'-phosphate serves as cofactor.

Its function is as follows. Activates the 3rd to 6th amino acids (Ala, D-Leu, Ala and D-Val) in linear gramicidin and catalyzes the formation of the peptide bond between them. This enzyme is also responsible for the epimerization of the 4th (D-Leu) and the 6th (D-Val) amino acids. This is Linear gramicidin synthase subunit B (lgrB) from Brevibacillus parabrevis.